Reading from the N-terminus, the 73-residue chain is Alternative prion protein (73 aa).

A helical transmembrane segment spans residues 32–52 (WWWLGAASWWWLGAAPWWWLG).

In terms of tissue distribution, detected in brain homogenate, primary neurons, and peripheral blood mononuclear cells (at protein level).

The protein localises to the mitochondrion outer membrane. The sequence is that of Alternative prion protein (PRNP) from Homo sapiens (Human).